We begin with the raw amino-acid sequence, 647 residues long: Pumilio homolog 3 (647 aa).

Over residues M1–T10 the composition is skewed to basic residues. Residues M1 to R123 are disordered. Residue K33 is modified to N6-acetyllysine. Residues P59 to K68 are compositionally biased toward basic residues. A compositionally biased stretch (basic and acidic residues) spans S102 to R123. Positions K105–K117 match the Nuclear localization signal motif. Residues E142–L509 enclose the PUM-HD domain. 11 Pumilio repeats span residues H176–A211, K212–H247, S248–G276, P288–H324, S325–T360, H361–G396, Q397–D434, K435–D503, K504–H550, P551–I595, and N596–S635.

In terms of assembly, interacts with PARP1 (via catalytic domain). In the adult eye, expressed primarily in retinal ganglion cells and, to a lesser extent, in the pigmented cells.

It is found in the nucleus. The protein resides in the nucleolus. Its subcellular location is the nucleoplasm. The protein localises to the chromosome. Inhibits the poly(ADP-ribosyl)ation activity of PARP1 and the degradation of PARP1 by CASP3 following genotoxic stress. Binds to double-stranded RNA or DNA without sequence specificity. Involved in development of the eye and of primordial germ cells. This chain is Pumilio homolog 3, found in Mus musculus (Mouse).